Here is an 85-residue protein sequence, read N- to C-terminus: Small ribosomal subunit protein uS17 (85 aa).

This sequence belongs to the universal ribosomal protein uS17 family. In terms of assembly, part of the 30S ribosomal subunit.

One of the primary rRNA binding proteins, it binds specifically to the 5'-end of 16S ribosomal RNA. This chain is Small ribosomal subunit protein uS17, found in Citrifermentans bemidjiense (strain ATCC BAA-1014 / DSM 16622 / JCM 12645 / Bem) (Geobacter bemidjiensis).